The primary structure comprises 551 residues: E3 ubiquitin-protein ligase HEL1 (551 aa).

The TRIAD supradomain stretch occupies residues 175-388 (NDFTCIICCD…KNFFQCTMYK (214 aa)). Residues C179, C182, C200, C203, C301, C304, H309, C314, C341, and C344 each contribute to the Zn(2+) site. An RING-type 1 zinc finger spans residues 179–225 (CIICCDKKDTETFALECGHEYCINCYRHYIKDKLHEGNIITCMDCSL). The segment at 242-314 (SKLMDSSIKS…GFEVHSPADC (73 aa)) adopts an IBR-type zinc-finger fold. An RING-type 2; atypical zinc finger spans residues 341–370 (CPKCSVNIEKNGGCNHMVCSSCKYEFCWIC). C354 is an active-site residue. C359, C362, C367, C370, H377, and C384 together coordinate Zn(2+).

Belongs to the RBR family. Interacts with the E2 ubiquitin-conjugating enzyme UBC4 and histones H3 and H4.

It catalyses the reaction [E2 ubiquitin-conjugating enzyme]-S-ubiquitinyl-L-cysteine + [acceptor protein]-L-lysine = [E2 ubiquitin-conjugating enzyme]-L-cysteine + [acceptor protein]-N(6)-ubiquitinyl-L-lysine.. It functions in the pathway protein modification; protein ubiquitination. Functionally, probable ubiquitin-protein ligase involved in the degradation-related ubiquitination of histones. Contributes to the post-translational regulation of histone protein levels by polyubiquitination of excess histones for subsequent degradation. The chain is E3 ubiquitin-protein ligase HEL1 from Saccharomyces cerevisiae (strain ATCC 204508 / S288c) (Baker's yeast).